The primary structure comprises 102 residues: Large ribosomal subunit protein bL21 (102 aa).

Residues 79–91 (RKDSKRKKGHRQP) are compositionally biased toward basic residues. Positions 79–102 (RKDSKRKKGHRQPYTKLTIDKINA) are disordered.

The protein belongs to the bacterial ribosomal protein bL21 family. As to quaternary structure, part of the 50S ribosomal subunit. Contacts protein L20.

Its function is as follows. This protein binds to 23S rRNA in the presence of protein L20. This is Large ribosomal subunit protein bL21 from Staphylococcus saprophyticus subsp. saprophyticus (strain ATCC 15305 / DSM 20229 / NCIMB 8711 / NCTC 7292 / S-41).